We begin with the raw amino-acid sequence, 754 residues long: Relaxin receptor 2 (754 aa).

Residues 1-416 (MIVFLVFKHL…SSFEDLLANN (416 aa)) are Extracellular-facing. Residues 44–81 (SCQKGYFPCGNLTKCLPRAFHCDGKDDCGNGADEENCG) form the LDL-receptor class A domain. Intrachain disulfides connect Cys-45–Cys-58, Cys-52–Cys-71, and Cys-65–Cys-80. Asn-54 is a glycosylation site (N-linked (GlcNAc...) asparagine). N-linked (GlcNAc...) asparagine glycosylation occurs at Asn-138. 10 LRR repeats span residues 138-159 (NVTLLSLKKNKIHSLPDKVFIK), 162-183 (KLKKIFLQHNCIRHISRKAFFG), 186-207 (NLQILYLNHNCITTLRPGIFKD), 210-231 (QLTWLILDDNPITRISQRLFTG), 234-255 (SLFFLSMVNNYLEALPKQMCAQ), 258-279 (QLNWVDLEGNRIKYLTNSTFLS), 282-303 (SLTVLFLPRNQIGFVPEKTFSS), 306-327 (NLGELDLSSNTITELSPHLFKD), 330-351 (LLQKLNLSSNPLMYLHKNQFES), and 354-375 (QLQSLDLERIEIPNINTRMFQP). The N-linked (GlcNAc...) asparagine glycan is linked to Asn-274. Asn-335 is a glycosylation site (N-linked (GlcNAc...) asparagine). N-linked (GlcNAc...) asparagine glycosylation occurs at Asn-378. Residues 417 to 437 (ILRIFVWVIAFITCFGNLFVI) form a helical membrane-spanning segment. Over 438–455 (GMRSFIKAENTTHAMSIK) the chain is Cytoplasmic. Residues 456-476 (ILCCADCLMGVYLFFVGIFDI) form a helical membrane-spanning segment. Residues 477–495 (KYRGQYQKYALLWMESVQC) are Extracellular-facing. Cys-495 and Cys-573 are joined by a disulfide. The chain crosses the membrane as a helical span at residues 496–518 (RLMGFLAMLSTEVSVLLLTYLTL). Residues 519 to 537 (EKFLVIVFPFSNIRPGKRQ) are Cytoplasmic-facing. Residues 538 to 558 (TSVILICIWMAGFLIAVIPFW) traverse the membrane as a helical segment. Residues 559 to 592 (NKDYFGNFYGKNGVCFPLYYDQTEDIGSKGYSLG) lie on the Extracellular side of the membrane. Residues 593–613 (IFLGVNLLAFLIIVFSYITMF) form a helical membrane-spanning segment. Topologically, residues 614–639 (CSIQKTALQTTEVRNCFGREVAVANR) are cytoplasmic. Residues 640–660 (FFFIVFSDAICWIPVFVVKIL) form a helical membrane-spanning segment. The Extracellular segment spans residues 661 to 670 (SLFRVEIPDT). The helical transmembrane segment at 671–691 (MTSWIVIFFLPVNSALNPILY) threads the bilayer. The Cytoplasmic segment spans residues 692-754 (TLTTNFFKDK…LGDSIMKPVS (63 aa)).

This sequence belongs to the G-protein coupled receptor 1 family. In terms of tissue distribution, expressed mainly in the brain, kidney, muscle, testis, thyroid, uterus, peripheral blood cells and bone marrow.

The protein localises to the cell membrane. Functionally, receptor for relaxin. The activity of this receptor is mediated by G proteins leading to stimulation of adenylate cyclase and an increase of cAMP. May also be a receptor for Leydig insulin-like peptide (INSL3). This Homo sapiens (Human) protein is Relaxin receptor 2 (RXFP2).